A 180-amino-acid polypeptide reads, in one-letter code: MSTTESQSYTADIPSERVVKTTDTIHVELTPHDLDSLAATRFVRSPSAGATVLFIGTTRDSFNNEPVSSLAYTSYTPLAISTLFKIATSILAKHSCTKIAIIHKLGECPIGEESIVIAVSAPHRQAAWRAGEETLEETKDRAEIWKLERFKGGEGVWRANRDGQKGVKVEGGKEGVEAKH.

Residues 123-124 (HR), lysine 139, and 146-148 (KLE) contribute to the substrate site. A disordered region spans residues 161–180 (RDGQKGVKVEGGKEGVEAKH).

This sequence belongs to the MoaE family. MOCS2B subfamily. In terms of assembly, heterotetramer; composed of 2 small (MOCS2A) and 2 large (MOCS2B) subunits.

Its subcellular location is the cytoplasm. The enzyme catalyses 2 [molybdopterin-synthase sulfur-carrier protein]-C-terminal-Gly-aminoethanethioate + cyclic pyranopterin phosphate + H2O = molybdopterin + 2 [molybdopterin-synthase sulfur-carrier protein]-C-terminal Gly-Gly + 2 H(+). The protein operates within cofactor biosynthesis; molybdopterin biosynthesis. Catalytic subunit of the molybdopterin synthase complex, a complex that catalyzes the conversion of precursor Z into molybdopterin. Acts by mediating the incorporation of 2 sulfur atoms from thiocarboxylated MOCS2A into precursor Z to generate a dithiolene group. This Pyrenophora tritici-repentis (strain Pt-1C-BFP) (Wheat tan spot fungus) protein is Molybdopterin synthase catalytic subunit.